A 216-amino-acid chain; its full sequence is A-type ATP synthase subunit D (216 aa).

This sequence belongs to the V-ATPase D subunit family. As to quaternary structure, has multiple subunits with at least A(3), B(3), C, D, E, F, H, I and proteolipid K(x). The N-terminus is blocked.

The protein resides in the cell membrane. Its function is as follows. Component of the A-type ATP synthase that produces ATP from ADP in the presence of a proton gradient across the membrane. The polypeptide is A-type ATP synthase subunit D (Sulfurisphaera tokodaii (strain DSM 16993 / JCM 10545 / NBRC 100140 / 7) (Sulfolobus tokodaii)).